The primary structure comprises 185 residues: MKTAQELRTGNVVMIGADAMVVQKAEYNKSGRNSAVVKMKFKNLLTGAGMESVYKADDKFDVVVLERKEVTYSYFADPMYVFMDADYNQFEVEGEMMGDALHYLEDGMACEVVFYNEKAISVELPTTLVREIIYTEPAVKGDTSSGKVLKNAKLNTGFELQVPLFCNIGDKIEIDTRTHEYRSRA.

The protein belongs to the elongation factor P family.

The protein resides in the cytoplasm. The protein operates within protein biosynthesis; polypeptide chain elongation. Involved in peptide bond synthesis. Stimulates efficient translation and peptide-bond synthesis on native or reconstituted 70S ribosomes in vitro. Probably functions indirectly by altering the affinity of the ribosome for aminoacyl-tRNA, thus increasing their reactivity as acceptors for peptidyl transferase. The chain is Elongation factor P from Paraburkholderia phytofirmans (strain DSM 17436 / LMG 22146 / PsJN) (Burkholderia phytofirmans).